The chain runs to 166 residues: Large ribosomal subunit protein uL11x (166 aa).

The protein belongs to the universal ribosomal protein uL11 family.

In terms of biological role, binds directly to 26S ribosomal RNA. The polypeptide is Large ribosomal subunit protein uL11x (RPL12C) (Arabidopsis thaliana (Mouse-ear cress)).